A 213-amino-acid polypeptide reads, in one-letter code: High frequency lysogenization protein HflD homolog (213 aa).

Belongs to the HflD family.

It localises to the cytoplasm. Its subcellular location is the cell inner membrane. This Nitrosococcus oceani (strain ATCC 19707 / BCRC 17464 / JCM 30415 / NCIMB 11848 / C-107) protein is High frequency lysogenization protein HflD homolog.